A 234-amino-acid chain; its full sequence is Leucyl/phenylalanyl-tRNA--protein transferase (234 aa).

It belongs to the L/F-transferase family.

It localises to the cytoplasm. It catalyses the reaction N-terminal L-lysyl-[protein] + L-leucyl-tRNA(Leu) = N-terminal L-leucyl-L-lysyl-[protein] + tRNA(Leu) + H(+). The catalysed reaction is N-terminal L-arginyl-[protein] + L-leucyl-tRNA(Leu) = N-terminal L-leucyl-L-arginyl-[protein] + tRNA(Leu) + H(+). The enzyme catalyses L-phenylalanyl-tRNA(Phe) + an N-terminal L-alpha-aminoacyl-[protein] = an N-terminal L-phenylalanyl-L-alpha-aminoacyl-[protein] + tRNA(Phe). Functionally, functions in the N-end rule pathway of protein degradation where it conjugates Leu, Phe and, less efficiently, Met from aminoacyl-tRNAs to the N-termini of proteins containing an N-terminal arginine or lysine. This Pectobacterium carotovorum subsp. carotovorum (strain PC1) protein is Leucyl/phenylalanyl-tRNA--protein transferase.